Here is a 117-residue protein sequence, read N- to C-terminus: uncharacterized protein (117 aa).

This is an uncharacterized protein from Acheta domesticus (House cricket).